Here is a 358-residue protein sequence, read N- to C-terminus: Protein-glutamate methylesterase/protein-glutamine glutaminase 1 (358 aa).

One can recognise a Response regulatory domain in the interval 8 to 125; the sequence is RVLIVDDSAV…ARGLEGYAEE (118 aa). The residue at position 59 (Asp59) is a 4-aspartylphosphate. The region spanning 165–352 is the CheB-type methylesterase domain; that stretch reads FRTTDRLIAI…LDRVAERLLA (188 aa). Active-site residues include Ser177, His203, and Asp299.

This sequence belongs to the CheB family. Post-translationally, phosphorylated by CheA. Phosphorylation of the N-terminal regulatory domain activates the methylesterase activity.

It is found in the cytoplasm. It catalyses the reaction [protein]-L-glutamate 5-O-methyl ester + H2O = L-glutamyl-[protein] + methanol + H(+). It carries out the reaction L-glutaminyl-[protein] + H2O = L-glutamyl-[protein] + NH4(+). In terms of biological role, involved in chemotaxis. Part of a chemotaxis signal transduction system that modulates chemotaxis in response to various stimuli. Catalyzes the demethylation of specific methylglutamate residues introduced into the chemoreceptors (methyl-accepting chemotaxis proteins or MCP) by CheR. Also mediates the irreversible deamidation of specific glutamine residues to glutamic acid. The sequence is that of Protein-glutamate methylesterase/protein-glutamine glutaminase 1 from Xanthomonas axonopodis pv. citri (strain 306).